The chain runs to 127 residues: Small ribosomal subunit protein uS11 (127 aa).

This sequence belongs to the universal ribosomal protein uS11 family. Part of the 30S ribosomal subunit. Interacts with proteins S7 and S18. Binds to IF-3.

Its function is as follows. Located on the platform of the 30S subunit, it bridges several disparate RNA helices of the 16S rRNA. Forms part of the Shine-Dalgarno cleft in the 70S ribosome. This is Small ribosomal subunit protein uS11 from Pelodictyon phaeoclathratiforme (strain DSM 5477 / BU-1).